The primary structure comprises 156 residues: DNA mismatch endonuclease Vsr (156 aa).

The Mg(2+) site is built by aspartate 51 and threonine 63.

This sequence belongs to the Vsr family. The cofactor is Mg(2+). Requires Zn(2+) as cofactor.

Deamination of 5-methylcytosine in DNA results in T/G mismatches. If unrepaired, these mismatches can lead to C-to-T transition mutations. The very short patch (VSP) repair process in E.coli counteracts the mutagenic process by repairing the mismatches in favor of the G-containing strand. This enzyme is an endonuclease that nicks double-stranded DNA within the sequence CT(AT)GN or NT(AT)GG next to the thymidine residue that is mismatched to 2'-deoxyguanosine. The incision is mismatch-dependent and strand-specific. This chain is DNA mismatch endonuclease Vsr, found in Escherichia coli (strain K12).